A 182-amino-acid polypeptide reads, in one-letter code: Ribosome-recycling factor (182 aa).

Belongs to the RRF family.

It is found in the cytoplasm. In terms of biological role, responsible for the release of ribosomes from messenger RNA at the termination of protein biosynthesis. May increase the efficiency of translation by recycling ribosomes from one round of translation to another. The polypeptide is Ribosome-recycling factor (Synechococcus sp. (strain CC9605)).